Reading from the N-terminus, the 353-residue chain is Ferrochelatase (353 aa).

Residues 1-13 (MTLERTGRDEEKA) show a composition bias toward basic and acidic residues. Residues 1–23 (MTLERTGRDEEKALTQPPSGHSS) form a disordered region. Residues histidine 223 and glutamate 304 each coordinate Fe cation.

Belongs to the ferrochelatase family.

The protein resides in the cytoplasm. It catalyses the reaction heme b + 2 H(+) = protoporphyrin IX + Fe(2+). The protein operates within porphyrin-containing compound metabolism; protoheme biosynthesis; protoheme from protoporphyrin-IX: step 1/1. Its function is as follows. Catalyzes the ferrous insertion into protoporphyrin IX. In Chelativorans sp. (strain BNC1), this protein is Ferrochelatase.